Here is a 331-residue protein sequence, read N- to C-terminus: Glyceraldehyde-3-phosphate dehydrogenase (331 aa).

NAD(+) contacts are provided by residues 12–13, D34, R78, and T120; that span reads RI. D-glyceraldehyde 3-phosphate contacts are provided by residues 149 to 151, T180, 209 to 210, and R232; these read SCT and TG. Residue C150 is the Nucleophile of the active site. N314 provides a ligand contact to NAD(+).

The protein belongs to the glyceraldehyde-3-phosphate dehydrogenase family. In terms of assembly, homotetramer.

Its subcellular location is the cytoplasm. The enzyme catalyses D-glyceraldehyde 3-phosphate + phosphate + NAD(+) = (2R)-3-phospho-glyceroyl phosphate + NADH + H(+). It functions in the pathway carbohydrate degradation; glycolysis; pyruvate from D-glyceraldehyde 3-phosphate: step 1/5. In terms of biological role, catalyzes the oxidative phosphorylation of glyceraldehyde 3-phosphate (G3P) to 1,3-bisphosphoglycerate (BPG) using the cofactor NAD. The first reaction step involves the formation of a hemiacetal intermediate between G3P and a cysteine residue, and this hemiacetal intermediate is then oxidized to a thioester, with concomitant reduction of NAD to NADH. The reduced NADH is then exchanged with the second NAD, and the thioester is attacked by a nucleophilic inorganic phosphate to produce BPG. The sequence is that of Glyceraldehyde-3-phosphate dehydrogenase (gapA) from Salmonella typhi.